A 445-amino-acid polypeptide reads, in one-letter code: Bifunctional protein GlmU (445 aa).

A pyrophosphorylase region spans residues 1–218 (MRALVLAAGK…LLEITGVNTR (218 aa)). Residues 6–9 (LAAG), lysine 20, glutamine 69, 74–75 (GT), 96–98 (YGD), glycine 134, glutamate 147, asparagine 162, and asparagine 216 each bind UDP-N-acetyl-alpha-D-glucosamine. Aspartate 98 contacts Mg(2+). Residue asparagine 216 coordinates Mg(2+). A linker region spans residues 219-239 (KTLVWLEEQLRMRKIEELLEN). The interval 240–445 (GVTILDPATT…GWVLKKRKEE (206 aa)) is N-acetyltransferase. Positions 321 and 339 each coordinate UDP-N-acetyl-alpha-D-glucosamine. The active-site Proton acceptor is the histidine 351. 2 residues coordinate UDP-N-acetyl-alpha-D-glucosamine: tyrosine 354 and asparagine 365. Acetyl-CoA contacts are provided by residues alanine 368, 374 to 375 (NY), serine 393, alanine 411, and arginine 428.

It in the N-terminal section; belongs to the N-acetylglucosamine-1-phosphate uridyltransferase family. This sequence in the C-terminal section; belongs to the transferase hexapeptide repeat family. In terms of assembly, homotrimer. Mg(2+) serves as cofactor.

The protein localises to the cytoplasm. The enzyme catalyses alpha-D-glucosamine 1-phosphate + acetyl-CoA = N-acetyl-alpha-D-glucosamine 1-phosphate + CoA + H(+). It catalyses the reaction N-acetyl-alpha-D-glucosamine 1-phosphate + UTP + H(+) = UDP-N-acetyl-alpha-D-glucosamine + diphosphate. It functions in the pathway nucleotide-sugar biosynthesis; UDP-N-acetyl-alpha-D-glucosamine biosynthesis; N-acetyl-alpha-D-glucosamine 1-phosphate from alpha-D-glucosamine 6-phosphate (route II): step 2/2. The protein operates within nucleotide-sugar biosynthesis; UDP-N-acetyl-alpha-D-glucosamine biosynthesis; UDP-N-acetyl-alpha-D-glucosamine from N-acetyl-alpha-D-glucosamine 1-phosphate: step 1/1. Its pathway is bacterial outer membrane biogenesis; LPS lipid A biosynthesis. In terms of biological role, catalyzes the last two sequential reactions in the de novo biosynthetic pathway for UDP-N-acetylglucosamine (UDP-GlcNAc). The C-terminal domain catalyzes the transfer of acetyl group from acetyl coenzyme A to glucosamine-1-phosphate (GlcN-1-P) to produce N-acetylglucosamine-1-phosphate (GlcNAc-1-P), which is converted into UDP-GlcNAc by the transfer of uridine 5-monophosphate (from uridine 5-triphosphate), a reaction catalyzed by the N-terminal domain. The chain is Bifunctional protein GlmU from Thermotoga maritima (strain ATCC 43589 / DSM 3109 / JCM 10099 / NBRC 100826 / MSB8).